The sequence spans 354 residues: UDP-N-acetylglucosamine--N-acetylmuramyl-(pentapeptide) pyrophosphoryl-undecaprenol N-acetylglucosamine transferase (354 aa).

Residues 15-17 (TGG), N127, R163, S191, I244, 263-268 (ALTVSE), and Q288 each bind UDP-N-acetyl-alpha-D-glucosamine.

This sequence belongs to the glycosyltransferase 28 family. MurG subfamily.

Its subcellular location is the cell inner membrane. It catalyses the reaction di-trans,octa-cis-undecaprenyl diphospho-N-acetyl-alpha-D-muramoyl-L-alanyl-D-glutamyl-meso-2,6-diaminopimeloyl-D-alanyl-D-alanine + UDP-N-acetyl-alpha-D-glucosamine = di-trans,octa-cis-undecaprenyl diphospho-[N-acetyl-alpha-D-glucosaminyl-(1-&gt;4)]-N-acetyl-alpha-D-muramoyl-L-alanyl-D-glutamyl-meso-2,6-diaminopimeloyl-D-alanyl-D-alanine + UDP + H(+). It participates in cell wall biogenesis; peptidoglycan biosynthesis. Functionally, cell wall formation. Catalyzes the transfer of a GlcNAc subunit on undecaprenyl-pyrophosphoryl-MurNAc-pentapeptide (lipid intermediate I) to form undecaprenyl-pyrophosphoryl-MurNAc-(pentapeptide)GlcNAc (lipid intermediate II). The polypeptide is UDP-N-acetylglucosamine--N-acetylmuramyl-(pentapeptide) pyrophosphoryl-undecaprenol N-acetylglucosamine transferase (Aliivibrio salmonicida (strain LFI1238) (Vibrio salmonicida (strain LFI1238))).